We begin with the raw amino-acid sequence, 533 residues long: Flavin-dependent halogenase armH4 (533 aa).

G16, A19, and E49 together coordinate FAD. The chloride site is built by S337 and G338. An FAD-binding site is contributed by V339.

It belongs to the flavin-dependent halogenase family.

The enzyme catalyses melleolide F + FADH2 + chloride + O2 = 6'-chloromelleolide F + FAD + 2 H2O + H(+). It catalyses the reaction melleolide F + bromide + FADH2 + O2 = 6'-bromomelleolide F + FAD + 2 H2O. Flavin-dependent halogenase involved in the biosynthesis of melleolides, a range of antifungal and phytotoxic polyketide derivatives composed of an orsellinic acid (OA) moiety esterified to various sesquiterpene alcohols. The halogenase catalyzes the transfer of a single chlorine atom to the melleolide backbone, resulting in a 6'-chloromelleolide product. The enzyme acts on free substrate and does not depend on carrier-protein-dependent acceptor molecules. Can also catalyze the transfer of a single bromine atom to the melleolide backbone in vitro. The chain is Flavin-dependent halogenase armH4 from Armillaria mellea (Honey mushroom).